Consider the following 94-residue polypeptide: Small ribosomal subunit protein uS19 (94 aa).

The protein belongs to the universal ribosomal protein uS19 family.

Its function is as follows. Protein S19 forms a complex with S13 that binds strongly to the 16S ribosomal RNA. The polypeptide is Small ribosomal subunit protein uS19 (Nitrosomonas eutropha (strain DSM 101675 / C91 / Nm57)).